Here is a 372-residue protein sequence, read N- to C-terminus: 4-hydroxy-3-methylbut-2-en-1-yl diphosphate synthase (flavodoxin) (372 aa).

Cys-270, Cys-273, Cys-305, and Glu-312 together coordinate [4Fe-4S] cluster.

The protein belongs to the IspG family. It depends on [4Fe-4S] cluster as a cofactor.

The catalysed reaction is (2E)-4-hydroxy-3-methylbut-2-enyl diphosphate + oxidized [flavodoxin] + H2O + 2 H(+) = 2-C-methyl-D-erythritol 2,4-cyclic diphosphate + reduced [flavodoxin]. It participates in isoprenoid biosynthesis; isopentenyl diphosphate biosynthesis via DXP pathway; isopentenyl diphosphate from 1-deoxy-D-xylulose 5-phosphate: step 5/6. Converts 2C-methyl-D-erythritol 2,4-cyclodiphosphate (ME-2,4cPP) into 1-hydroxy-2-methyl-2-(E)-butenyl 4-diphosphate. This is 4-hydroxy-3-methylbut-2-en-1-yl diphosphate synthase (flavodoxin) from Escherichia coli O9:H4 (strain HS).